Here is a 456-residue protein sequence, read N- to C-terminus: Bifunctional protein GlmU (456 aa).

The pyrophosphorylase stretch occupies residues 1 to 229; that stretch reads MSNSAMSVVI…LSEVEGVNNR (229 aa). Residues 11-14, Lys-25, Gln-76, 81-82, 103-105, Gly-140, Glu-154, Asn-169, and Asn-227 contribute to the UDP-N-acetyl-alpha-D-glucosamine site; these read LAAG, GT, and YGD. Residue Asp-105 participates in Mg(2+) binding. Asn-227 contributes to the Mg(2+) binding site. The tract at residues 230–250 is linker; it reads LQLARLERVYQAEQAEKLLLA. An N-acetyltransferase region spans residues 251 to 456; that stretch reads GVMLRDPARF…QGWQRPVKKK (206 aa). Positions 333 and 351 each coordinate UDP-N-acetyl-alpha-D-glucosamine. His-363 (proton acceptor) is an active-site residue. Positions 366 and 377 each coordinate UDP-N-acetyl-alpha-D-glucosamine. Acetyl-CoA-binding positions include Ala-380, 386-387, Ser-405, Ala-423, and Arg-440; that span reads NY.

The protein in the N-terminal section; belongs to the N-acetylglucosamine-1-phosphate uridyltransferase family. This sequence in the C-terminal section; belongs to the transferase hexapeptide repeat family. As to quaternary structure, homotrimer. Mg(2+) is required as a cofactor.

Its subcellular location is the cytoplasm. It catalyses the reaction alpha-D-glucosamine 1-phosphate + acetyl-CoA = N-acetyl-alpha-D-glucosamine 1-phosphate + CoA + H(+). It carries out the reaction N-acetyl-alpha-D-glucosamine 1-phosphate + UTP + H(+) = UDP-N-acetyl-alpha-D-glucosamine + diphosphate. Its pathway is nucleotide-sugar biosynthesis; UDP-N-acetyl-alpha-D-glucosamine biosynthesis; N-acetyl-alpha-D-glucosamine 1-phosphate from alpha-D-glucosamine 6-phosphate (route II): step 2/2. The protein operates within nucleotide-sugar biosynthesis; UDP-N-acetyl-alpha-D-glucosamine biosynthesis; UDP-N-acetyl-alpha-D-glucosamine from N-acetyl-alpha-D-glucosamine 1-phosphate: step 1/1. It functions in the pathway bacterial outer membrane biogenesis; LPS lipid A biosynthesis. Functionally, catalyzes the last two sequential reactions in the de novo biosynthetic pathway for UDP-N-acetylglucosamine (UDP-GlcNAc). The C-terminal domain catalyzes the transfer of acetyl group from acetyl coenzyme A to glucosamine-1-phosphate (GlcN-1-P) to produce N-acetylglucosamine-1-phosphate (GlcNAc-1-P), which is converted into UDP-GlcNAc by the transfer of uridine 5-monophosphate (from uridine 5-triphosphate), a reaction catalyzed by the N-terminal domain. This Klebsiella pneumoniae subsp. pneumoniae (strain ATCC 700721 / MGH 78578) protein is Bifunctional protein GlmU.